Here is a 30-residue protein sequence, read N- to C-terminus: AKYGMAIDLHKCAGCGACGLACKTQNNTDD.

Positions 12, 15, 18, and 22 each coordinate [4Fe-4S] cluster.

Heterodimer composed of one large subunit (ArrA) and one small subunit (ArrB). [4Fe-4S] cluster serves as cofactor.

The protein localises to the periplasm. In terms of biological role, component of the arsenate respiratory reductase (Arr) complex, which catalyzes the reduction of arsenate (As(V)) to arsenite (As(III)). ArrB is probably the electron transfer subunit. The chain is Arsenate respiratory reductase iron-sulfur subunit ArrB from Chrysiogenes arsenatis.